Here is a 241-residue protein sequence, read N- to C-terminus: Phosphoribosylaminoimidazole-succinocarboxamide synthase (241 aa).

Belongs to the SAICAR synthetase family.

It carries out the reaction 5-amino-1-(5-phospho-D-ribosyl)imidazole-4-carboxylate + L-aspartate + ATP = (2S)-2-[5-amino-1-(5-phospho-beta-D-ribosyl)imidazole-4-carboxamido]succinate + ADP + phosphate + 2 H(+). It participates in purine metabolism; IMP biosynthesis via de novo pathway; 5-amino-1-(5-phospho-D-ribosyl)imidazole-4-carboxamide from 5-amino-1-(5-phospho-D-ribosyl)imidazole-4-carboxylate: step 1/2. This Lacticaseibacillus casei (strain BL23) (Lactobacillus casei) protein is Phosphoribosylaminoimidazole-succinocarboxamide synthase.